Consider the following 351-residue polypeptide: Cell shape-determining protein MreB (351 aa).

Residues 20 to 22 (TAN), 169 to 171 (GGT), 217 to 220 (ERIK), and 299 to 302 (GGAL) contribute to the ATP site.

Belongs to the FtsA/MreB family. In terms of assembly, forms polymers.

It localises to the cytoplasm. Functionally, forms membrane-associated dynamic filaments that are essential for cell shape determination. Acts by regulating cell wall synthesis and cell elongation, and thus cell shape. A feedback loop between cell geometry and MreB localization may maintain elongated cell shape by targeting cell wall growth to regions of negative cell wall curvature. The sequence is that of Cell shape-determining protein MreB from Haemophilus influenzae (strain ATCC 51907 / DSM 11121 / KW20 / Rd).